The chain runs to 624 residues: Chitin elicitor receptor kinase 1 (624 aa).

The first 18 residues, 1-18, serve as a signal peptide directing secretion; it reads MEASTSLLVLVLAAAAFA. Residues 19 to 240 lie on the Extracellular side of the membrane; that stretch reads AGTVTEAAGD…SPGKGASAGA (222 aa). 3 cysteine pairs are disulfide-bonded: Cys30/Cys93, Cys34/Cys160, and Cys91/Cys158. N-linked (GlcNAc...) asparagine glycosylation is present at Asn48. 115 to 121 is a binding site for chitin; it reads RGQIYTS. N-linked (GlcNAc...) asparagine glycosylation is present at Asn128. 142 to 148 lines the chitin pocket; that stretch reads PANNIPD. N-linked (GlcNAc...) asparagine glycosylation is found at Asn153 and Asn157. One can recognise a LysM domain in the interval 173-218; it reads LTYPLRAEDTLASVAATYGLSSQLDVVRRYNPGMESATGSGIVYIP. N-linked (GlcNAc...) asparagine glycosylation is present at Asn223. The helical transmembrane segment at 241–261 threads the bilayer; that stretch reads IAGGVVAGVVVLAAIFLYIIF. Over 262 to 624 the chain is Cytoplasmic; sequence YRRRKAKQAT…QGLVNLMSGR (363 aa). Residues 324–599 form the Protein kinase domain; that stretch reads FSIGNKIGQG…RSVVVALMTL (276 aa). Residues 330-338 and Lys351 each bind ATP; that span reads IGQGGFGAV. Residue Asp443 is the Proton acceptor of the active site.

This sequence belongs to the protein kinase superfamily. Ser/Thr protein kinase family. As to quaternary structure, homooligomer. Interacts with CEBIP. Interacts with LYP4 and LYP6. Interacts with RLCK176. Autophosphorylated; induced by chitin and derivatives. In terms of tissue distribution, expressed in seedlings, roots, shoots and stems, and, to a lower extent, in flowers.

Its subcellular location is the cell membrane. It carries out the reaction L-seryl-[protein] + ATP = O-phospho-L-seryl-[protein] + ADP + H(+). It catalyses the reaction L-threonyl-[protein] + ATP = O-phospho-L-threonyl-[protein] + ADP + H(+). Its function is as follows. Lysin motif (LysM) receptor kinase required as a cell surface receptor for chitin elicitor (chitooligosaccharides) signaling leading to innate immunity in response to biotic stresses. Involved in the resistance to pathogenic fungi, probably by sensing microbe-associated molecular patterns (MAMP) and pathogen-associated molecular patterns (PAMP). Involved in the detection of microbial peptidoglycans (PGNs) and mediates PGN response. Plays dual roles in PGN and chitin signaling during innate immunity. Acts as an adapter for LYP4 and LYP6 and mediates signal transduction from the extracellular to intracellular spaces. Participates in the activation of defense genes during response to PGN and chitin. Phosphorylates the downstream partner RLCK185 in response to chitin elicitation. The protein is Chitin elicitor receptor kinase 1 of Oryza sativa subsp. japonica (Rice).